Here is a 662-residue protein sequence, read N- to C-terminus: Acetyl-coenzyme A synthetase (662 aa).

Residues 197–200 (RKGK) and T317 contribute to the CoA site. ATP is bound by residues 393–395 (GEP), 417–422 (DTWWQT), D510, and R525. Residue S533 coordinates CoA. ATP is bound at residue R536. Positions 549 and 552 each coordinate Mg(2+). K623 carries the N6-acetyllysine modification.

The protein belongs to the ATP-dependent AMP-binding enzyme family. The cofactor is Mg(2+). Acetylated. Deacetylation by the SIR2-homolog deacetylase activates the enzyme.

The catalysed reaction is acetate + ATP + CoA = acetyl-CoA + AMP + diphosphate. Functionally, catalyzes the conversion of acetate into acetyl-CoA (AcCoA), an essential intermediate at the junction of anabolic and catabolic pathways. AcsA undergoes a two-step reaction. In the first half reaction, AcsA combines acetate with ATP to form acetyl-adenylate (AcAMP) intermediate. In the second half reaction, it can then transfer the acetyl group from AcAMP to the sulfhydryl group of CoA, forming the product AcCoA. This is Acetyl-coenzyme A synthetase from Helicobacter pylori (strain HPAG1).